Reading from the N-terminus, the 381-residue chain is DNA primase DnaG (381 aa).

Residues 173 to 259 (DAILVVEGRS…EVEDLEKDEI (87 aa)) form the Toprim domain. Mg(2+)-binding residues include Glu179, Asp221, and Asp223.

This sequence belongs to the archaeal DnaG primase family. As to quaternary structure, forms a ternary complex with MCM helicase and DNA. Component of the archaeal exosome complex. It depends on Mg(2+) as a cofactor.

It carries out the reaction ssDNA + n NTP = ssDNA/pppN(pN)n-1 hybrid + (n-1) diphosphate.. RNA polymerase that catalyzes the synthesis of short RNA molecules used as primers for DNA polymerase during DNA replication. Also part of the exosome, which is a complex involved in RNA degradation. Acts as a poly(A)-binding protein that enhances the interaction between heteromeric, adenine-rich transcripts and the exosome. The protein is DNA primase DnaG of Methanothermobacter thermautotrophicus (strain ATCC 29096 / DSM 1053 / JCM 10044 / NBRC 100330 / Delta H) (Methanobacterium thermoautotrophicum).